The chain runs to 281 residues: Pantothenate synthetase (281 aa).

30–37 (MGYYHAGH) lines the ATP pocket. Residue His37 is the Proton donor of the active site. Residue Gln61 participates in (R)-pantoate binding. Position 61 (Gln61) interacts with beta-alanine. 147-150 (GEKD) contributes to the ATP binding site. Gln153 contributes to the (R)-pantoate binding site. Residues Val176 and 184–187 (MSSR) contribute to the ATP site.

Belongs to the pantothenate synthetase family. As to quaternary structure, homodimer.

Its subcellular location is the cytoplasm. The catalysed reaction is (R)-pantoate + beta-alanine + ATP = (R)-pantothenate + AMP + diphosphate + H(+). Its pathway is cofactor biosynthesis; (R)-pantothenate biosynthesis; (R)-pantothenate from (R)-pantoate and beta-alanine: step 1/1. Functionally, catalyzes the condensation of pantoate with beta-alanine in an ATP-dependent reaction via a pantoyl-adenylate intermediate. The sequence is that of Pantothenate synthetase from Oleidesulfovibrio alaskensis (strain ATCC BAA-1058 / DSM 17464 / G20) (Desulfovibrio alaskensis).